The sequence spans 501 residues: Arabinose import ATP-binding protein AraG (501 aa).

ABC transporter domains lie at 4–239 and 252–495; these read LEFN…MVGR and LGDN…LPDK. 36–43 is a binding site for ATP; sequence GENGAGKS.

This sequence belongs to the ABC transporter superfamily. Arabinose importer (TC 3.A.1.2.2) family. The complex is composed of two ATP-binding proteins (AraG), two transmembrane proteins (AraH) and a solute-binding protein (AraF).

Its subcellular location is the cell inner membrane. The enzyme catalyses L-arabinose(out) + ATP + H2O = L-arabinose(in) + ADP + phosphate + H(+). Functionally, part of the ABC transporter complex AraFGH involved in arabinose import. Responsible for energy coupling to the transport system. This Rhizobium etli (strain ATCC 51251 / DSM 11541 / JCM 21823 / NBRC 15573 / CFN 42) protein is Arabinose import ATP-binding protein AraG.